Consider the following 537-residue polypeptide: MAAAAAELVIGWCIFGLLLLAILAFCWVYVRKYQSQRESEVVSTVTAIFSLAVALITSALLPVDIFLVSYMKNQNGTFKDWADANVTVQIENTVLYGYYTLYSVILFCVFFWIPFVYFYYEEKDEDDASKCTQIKTALKYTLGFVVICALLLLVGAFVPLHLPNNNNSTEWEKVKLLFEDLGTGQGLAALSFSISSLTLIGMLAAITYTAYGMSALPLNLIKGTRSTAYERLENTEDIEEVEQHIQTIRSKSKDGRPLPARDRRALKQCEERLRTLRKRERHLEFIENSWWTKFCGALRPLKIIWGIFFILVALLFVISLFLSNLDKALHSAGIDSGFIIFGTNLSNPLNMLLPLLQTVFPLDYILITIIIMYFIFTSMAGIRNIGIWFFWIRLYKIRRGRTRPQALLFLCMILLLIVLHTSYMIYSLAPQYVMYGSQNYLIESNITSDAHKGNSTLAVPKRCDADAPKDQCTVTRTYIFLHKFWFFSAAYYFGNWAFLVVFLIGLIVSCCKGKKSVIEGVDEDSDLSDDEPSAYSA.

At 1–7 the chain is on the extracellular side; the sequence is MAAAAAE. The chain crosses the membrane as a helical span at residues 8–28; sequence LVIGWCIFGLLLLAILAFCWV. The Cytoplasmic portion of the chain corresponds to 29–47; the sequence is YVRKYQSQRESEVVSTVTA. The helical transmembrane segment at 48–68 threads the bilayer; sequence IFSLAVALITSALLPVDIFLV. Topologically, residues 69–97 are extracellular; the sequence is SYMKNQNGTFKDWADANVTVQIENTVLYG. Residues N75 and N85 are each glycosylated (N-linked (GlcNAc...) asparagine). A helical membrane pass occupies residues 98 to 118; sequence YYTLYSVILFCVFFWIPFVYF. Topologically, residues 119–141 are cytoplasmic; it reads YYEEKDEDDASKCTQIKTALKYT. Residues 142 to 162 traverse the membrane as a helical segment; that stretch reads LGFVVICALLLLVGAFVPLHL. Residues 163–185 lie on the Extracellular side of the membrane; sequence PNNNNSTEWEKVKLLFEDLGTGQ. N-linked (GlcNAc...) asparagine glycans are attached at residues N166 and N167. Residues 186 to 206 form a helical membrane-spanning segment; it reads GLAALSFSISSLTLIGMLAAI. Over 207–302 the chain is Cytoplasmic; the sequence is TYTAYGMSAL…KFCGALRPLK (96 aa). The YERL motif; mediates interaction with adapter protein complex 2 and is essential for its function in clathrin-mediated endocytosis of INSR motif lies at 229-232; sequence YERL. Phosphothreonine is present on T235. The WTKF motif; mediates interaction with adapter protein complex 2 and is essential for its function in clathrin-mediated endocytosis of INSR motif lies at 291-294; the sequence is WTKF. Residues 303 to 323 traverse the membrane as a helical segment; the sequence is IIWGIFFILVALLFVISLFLS. At 324-361 the chain is on the extracellular side; that stretch reads NLDKALHSAGIDSGFIIFGTNLSNPLNMLLPLLQTVFP. Residue N344 is glycosylated (N-linked (GlcNAc...) asparagine). The chain crosses the membrane as a helical span at residues 362–382; the sequence is LDYILITIIIMYFIFTSMAGI. Residues 383–405 are Cytoplasmic-facing; sequence RNIGIWFFWIRLYKIRRGRTRPQ. A helical membrane pass occupies residues 406–426; it reads ALLFLCMILLLIVLHTSYMIY. Topologically, residues 427 to 483 are extracellular; the sequence is SLAPQYVMYGSQNYLIESNITSDAHKGNSTLAVPKRCDADAPKDQCTVTRTYIFLHK. 2 N-linked (GlcNAc...) asparagine glycosylation sites follow: N445 and N454. A helical transmembrane segment spans residues 484-504; the sequence is FWFFSAAYYFGNWAFLVVFLI. The Cytoplasmic portion of the chain corresponds to 505–537; it reads GLIVSCCKGKKSVIEGVDEDSDLSDDEPSAYSA. 2 positions are modified to phosphoserine: S525 and S528.

It belongs to the LIMR family. LMBRD1 subfamily. Interacts with ABCD4; this interaction induces the translocation of ABCD4 from the endoplasmic reticulum to the lysosome. Interacts with ABCD4 and MMACHC; this interaction ensures the transport of cobalamin from the lysosome to the cytoplasm. Interacts with INSR, adapter protein complex 2 and clathrin heavy chain. Post-translationally, N-glycosylated.

Its subcellular location is the endoplasmic reticulum membrane. The protein localises to the lysosome membrane. It is found in the cell membrane. It localises to the cytoplasmic vesicle. The protein resides in the clathrin-coated vesicle. Functionally, lysosomal membrane chaperone required to export cobalamin (vitamin B12) from the lysosome to the cytosol, allowing its conversion to cofactors. Targets ABCD4 transporter from the endoplasmic reticulum to the lysosome. Then forms a complex with lysosomal ABCD4 and cytoplasmic MMACHC to transport cobalamin across the lysosomal membrane. Acts as an adapter protein which plays an important role in mediating and regulating the internalization of the insulin receptor (INSR). Involved in clathrin-mediated endocytosis of INSR via its interaction with adapter protein complex 2. Essential for the initiation of gastrulation and early formation of mesoderm structures during embryogenesis. The polypeptide is Lysosomal cobalamin transport escort protein LMBD1 (Mus musculus (Mouse)).